We begin with the raw amino-acid sequence, 298 residues long: MRNTILFGVSMILLANLCFGIMSAFVKITADYFSPMENVFYRSITMTLLLLLIYPFKPYRLKSYKQGGFKKLAFRVVVGGLAMLAFFYNIEKISLATATAFSQCAPIYTVLLSPLLLKEKLKRSALISACIGLVGVVLISDPSVENVGLVEIIMGILSGIFVSLAYITLRDLREYYDKQAVILAFAFGMSLLGLAGMFIDIPFLSTGVHIPRKEDILWISLIGISGTLGQYFLTYAYMNAPAGIIAPIEYTRIVWGLLFGLYLGDTFLDLKSSLGVALILCSGLLIALPALLKELKKI.

10 consecutive transmembrane segments (helical) span residues 5 to 25 (ILFG…MSAF), 36 to 56 (MENV…IYPF), 76 to 96 (VVVG…ISLA), 97 to 117 (TATA…PLLL), 124 to 144 (SALI…DPSV), 147 to 167 (VGLV…LAYI), 181 to 201 (VILA…FIDI), 216 to 236 (ILWI…LTYA), 244 to 264 (IIAP…LYLG), and 272 to 292 (SSLG…PALL). In terms of domain architecture, EamA 1 spans 17–141 (LCFGIMSAFV…GLVGVVLISD (125 aa)). The EamA 2 domain occupies 183–288 (LAFAFGMSLL…ILCSGLLIAL (106 aa)).

The protein belongs to the EamA transporter family.

The protein resides in the cell membrane. This is an uncharacterized protein from Helicobacter pylori (strain J99 / ATCC 700824) (Campylobacter pylori J99).